An 84-amino-acid polypeptide reads, in one-letter code: NAD(P)H-quinone oxidoreductase subunit O (84 aa).

The protein belongs to the complex I NdhO subunit family. NDH-1 can be composed of about 15 different subunits; different subcomplexes with different compositions have been identified which probably have different functions.

The protein resides in the cellular thylakoid membrane. The enzyme catalyses a plastoquinone + NADH + (n+1) H(+)(in) = a plastoquinol + NAD(+) + n H(+)(out). The catalysed reaction is a plastoquinone + NADPH + (n+1) H(+)(in) = a plastoquinol + NADP(+) + n H(+)(out). Functionally, NDH-1 shuttles electrons from an unknown electron donor, via FMN and iron-sulfur (Fe-S) centers, to quinones in the respiratory and/or the photosynthetic chain. The immediate electron acceptor for the enzyme in this species is believed to be plastoquinone. Couples the redox reaction to proton translocation, and thus conserves the redox energy in a proton gradient. Cyanobacterial NDH-1 also plays a role in inorganic carbon-concentration. The polypeptide is NAD(P)H-quinone oxidoreductase subunit O (Synechococcus sp. (strain CC9902)).